The chain runs to 505 residues: 4-alpha-glucanotransferase (505 aa).

Belongs to the disproportionating enzyme family.

Its subcellular location is the cytoplasm. It catalyses the reaction Transfers a segment of a (1-&gt;4)-alpha-D-glucan to a new position in an acceptor, which may be glucose or a (1-&gt;4)-alpha-D-glucan.. In Streptococcus pneumoniae serotype 4 (strain ATCC BAA-334 / TIGR4), this protein is 4-alpha-glucanotransferase (malQ).